A 718-amino-acid chain; its full sequence is DNA ligase (718 aa).

Residues 44 to 48 (DADYD), 93 to 94 (SL), and E127 each bind NAD(+). K129 functions as the N6-AMP-lysine intermediate in the catalytic mechanism. 4 residues coordinate NAD(+): R150, E186, K302, and K326. C432, C435, C456, and C462 together coordinate Zn(2+). Residues 640 to 718 (TAGSPVAGKT…EDEWLALISG (79 aa)) enclose the BRCT domain.

It belongs to the NAD-dependent DNA ligase family. LigA subfamily. It depends on Mg(2+) as a cofactor. Mn(2+) is required as a cofactor.

It catalyses the reaction NAD(+) + (deoxyribonucleotide)n-3'-hydroxyl + 5'-phospho-(deoxyribonucleotide)m = (deoxyribonucleotide)n+m + AMP + beta-nicotinamide D-nucleotide.. Functionally, DNA ligase that catalyzes the formation of phosphodiester linkages between 5'-phosphoryl and 3'-hydroxyl groups in double-stranded DNA using NAD as a coenzyme and as the energy source for the reaction. It is essential for DNA replication and repair of damaged DNA. This is DNA ligase from Rhizobium etli (strain CIAT 652).